The primary structure comprises 139 residues: Transcription antitermination protein NusB (139 aa).

It belongs to the NusB family.

Involved in transcription antitermination. Required for transcription of ribosomal RNA (rRNA) genes. Binds specifically to the boxA antiterminator sequence of the ribosomal RNA (rrn) operons. This chain is Transcription antitermination protein NusB, found in Baumannia cicadellinicola subsp. Homalodisca coagulata.